The sequence spans 153 residues: Probable ubiquitin-conjugating enzyme E2 C (153 aa).

The region spanning 6–153 (SVSKRLQSEL…KRYQEATSRP (148 aa)) is the UBC core domain. The Glycyl thioester intermediate role is filled by Cys90.

This sequence belongs to the ubiquitin-conjugating enzyme family. Component of the APC/C complex. Autoubiquitinated by the APC/C complex, leading to its degradation by the proteasome.

The enzyme catalyses S-ubiquitinyl-[E1 ubiquitin-activating enzyme]-L-cysteine + [E2 ubiquitin-conjugating enzyme]-L-cysteine = [E1 ubiquitin-activating enzyme]-L-cysteine + S-ubiquitinyl-[E2 ubiquitin-conjugating enzyme]-L-cysteine.. Its pathway is protein modification; protein ubiquitination. Its function is as follows. Catalyzes the covalent attachment of ubiquitin to other proteins. Acts as an essential factor of the anaphase promoting complex/cyclosome (APC/C), a cell cycle-regulated ubiquitin ligase that controls progression through mitosis. Acts by initiating polyubiquitin chains on APC/C substrates, leading to the degradation of APC/C substrates by the proteasome and promoting mitotic exit. The protein is Probable ubiquitin-conjugating enzyme E2 C (ube2c) of Dictyostelium discoideum (Social amoeba).